A 95-amino-acid chain; its full sequence is uncharacterized protein (95 aa).

The disordered stretch occupies residues 1 to 73 (MAHFKDDLQT…AQQPSMRTEL (73 aa)). Composition is skewed to polar residues over residues 42 to 52 (SNHSPSVQESP) and 62 to 73 (GSAQQPSMRTEL).

This is an uncharacterized protein from Homo sapiens (Human).